The primary structure comprises 192 residues: Sarcoplasmic calcium-binding protein 1 (192 aa).

Alanine 1 is modified (N-acetylalanine). EF-hand domains lie at 4-39, 56-91, 100-135, and 136-171; these read WDNR…NTLI, IMSN…VCVG, AFKV…RSAF, and ANIK…YAQF. Positions 17, 19, 21, 28, 69, 71, 73, 75, 80, 113, 115, 117, and 124 each coordinate Ca(2+).

In terms of assembly, SCPs from crayfish, lobster, and shrimp are polymorphic dimers.

Like parvalbumins, SCPs seem to be more abundant in fast contracting muscles, but no functional relationship can be established from this distribution. The polypeptide is Sarcoplasmic calcium-binding protein 1 (Astacus leptodactylus (Turkish narrow-clawed crayfish)).